The following is a 208-amino-acid chain: dITP/XTP pyrophosphatase (208 aa).

Residue 11–16 (SRNWKK) coordinates substrate. Residue Asp-76 is the Proton acceptor of the active site. Asp-76 contacts Mg(2+). Residues Ser-77, 158 to 161 (FGYD), Lys-184, and 189 to 190 (HR) contribute to the substrate site.

The protein belongs to the HAM1 NTPase family. In terms of assembly, homodimer. Mg(2+) is required as a cofactor.

The catalysed reaction is XTP + H2O = XMP + diphosphate + H(+). The enzyme catalyses dITP + H2O = dIMP + diphosphate + H(+). It carries out the reaction ITP + H2O = IMP + diphosphate + H(+). Functionally, pyrophosphatase that catalyzes the hydrolysis of nucleoside triphosphates to their monophosphate derivatives, with a high preference for the non-canonical purine nucleotides XTP (xanthosine triphosphate), dITP (deoxyinosine triphosphate) and ITP. Seems to function as a house-cleaning enzyme that removes non-canonical purine nucleotides from the nucleotide pool, thus preventing their incorporation into DNA/RNA and avoiding chromosomal lesions. The chain is dITP/XTP pyrophosphatase from Mycobacterium leprae (strain TN).